The following is a 274-amino-acid chain: Orotidine 5'-phosphate decarboxylase (274 aa).

Positions 1–15 are enriched in low complexity; the sequence is MSAGRRSSGGRSAAA. The interval 1 to 21 is disordered; that stretch reads MSAGRRSSGGRSAAAPRFTPP. Substrate is bound by residues Asp32, Lys54, 99-108, Thr154, Arg215, Gln224, Gly244, and Arg245; that span reads DLKLHDIPAT. The active-site Proton donor is the Lys101.

The protein belongs to the OMP decarboxylase family. Type 1 subfamily. In terms of assembly, homodimer.

It carries out the reaction orotidine 5'-phosphate + H(+) = UMP + CO2. It functions in the pathway pyrimidine metabolism; UMP biosynthesis via de novo pathway; UMP from orotate: step 2/2. Its function is as follows. Catalyzes the decarboxylation of orotidine 5'-monophosphate (OMP) to uridine 5'-monophosphate (UMP). In Frankia casuarinae (strain DSM 45818 / CECT 9043 / HFP020203 / CcI3), this protein is Orotidine 5'-phosphate decarboxylase.